The chain runs to 189 residues: RNA-binding protein (189 aa).

The C4-type zinc finger occupies 55–69 (CICPSSNHLVDDCVC). Residues 114–189 (FLTSVNPGES…DANTRKSKRK (76 aa)) are disordered. The segment covering 158-167 (SSSERKRKEY) has biased composition (basic and acidic residues). A compositionally biased stretch (low complexity) spans 168 to 180 (SSNSETDLSSDSD).

Belongs to the phytoreovirus RNA-binding protein family.

The protein localises to the host cytoplasm. Constituent of viral factories. Binds to ssRNA and dsRNA. This chain is RNA-binding protein, found in Alopecurus aequalis (Barnyard grass).